A 359-amino-acid chain; its full sequence is Histidinol-phosphate aminotransferase (359 aa).

N6-(pyridoxal phosphate)lysine is present on Lys-217.

It belongs to the class-II pyridoxal-phosphate-dependent aminotransferase family. Histidinol-phosphate aminotransferase subfamily. As to quaternary structure, homodimer. Pyridoxal 5'-phosphate is required as a cofactor.

The catalysed reaction is L-histidinol phosphate + 2-oxoglutarate = 3-(imidazol-4-yl)-2-oxopropyl phosphate + L-glutamate. The protein operates within amino-acid biosynthesis; L-histidine biosynthesis; L-histidine from 5-phospho-alpha-D-ribose 1-diphosphate: step 7/9. In Roseobacter denitrificans (strain ATCC 33942 / OCh 114) (Erythrobacter sp. (strain OCh 114)), this protein is Histidinol-phosphate aminotransferase.